An 889-amino-acid chain; its full sequence is Translation initiation factor IF-2 (889 aa).

Residues 115–236 (EAEAQAKAEA…EAERYSDHHI (122 aa)) are compositionally biased toward basic and acidic residues. Positions 115–293 (EAEAQAKAEA…RNRSTAPESM (179 aa)) are disordered. The span at 257 to 270 (GRRARNKNTAKTKR) shows a compositional bias: basic residues. Basic and acidic residues predominate over residues 271–280 (GGKDARDGRE). The 170-residue stretch at 389–558 (PRAPVVTIMG…LLQAEVLELK (170 aa)) folds into the tr-type G domain. The G1 stretch occupies residues 398–405 (GHVDHGKT). 398–405 (GHVDHGKT) is a binding site for GTP. The tract at residues 423–427 (GITQH) is G2. Residues 444–447 (DTPG) form a G3 region. GTP contacts are provided by residues 444 to 448 (DTPGH) and 498 to 501 (NKMD). Positions 498 to 501 (NKMD) are G4. Residues 534–536 (SAK) form a G5 region.

The protein belongs to the TRAFAC class translation factor GTPase superfamily. Classic translation factor GTPase family. IF-2 subfamily.

The protein resides in the cytoplasm. In terms of biological role, one of the essential components for the initiation of protein synthesis. Protects formylmethionyl-tRNA from spontaneous hydrolysis and promotes its binding to the 30S ribosomal subunits. Also involved in the hydrolysis of GTP during the formation of the 70S ribosomal complex. In Shewanella sp. (strain ANA-3), this protein is Translation initiation factor IF-2.